The sequence spans 376 residues: MSSGDGQQSQALTKPSFSEVQASALVESVFGLKVSKIQPLPSYDDQNFHVCIARTKVTTDGPNECVLKISNTESSKTPDLIEVQTHIIMFLRAAGFPTASVCRTKGDNVSSLVSVDSGSEVKSYLVRLLTYLPGRPIAEIPIGPQLLYEIGRLAAKLDKTLEKFHHPKLSSLHRENFIWNLKSVPLLEKYLYALGQNRNREIVEQVIQLFKDEVMTSLSHFRECINHGDLNDHNILIVSSESAFGDAVYQVSGILDFDDMSYGYYVFEVAITIMYMMIESKTPIQVGGHVLAGFESVVPLTPVERGALFLLVCSRFCQSLVLAAYSCQLYPENEEYLMITAKTGWKHLQQMFDMGRKAVEEIWFETAKSYESGISM.

Residue Asp-229 is the Proton acceptor of the active site.

Belongs to the aminoglycoside phosphotransferase family.

Its subcellular location is the cytoplasm. It carries out the reaction (5R)-5-hydroxy-L-lysine + GTP = (5R)-5-phosphooxy-L-lysine + GDP + H(+). Its function is as follows. Catalyzes the GTP-dependent phosphorylation of 5-hydroxy-L-lysine. This chain is Hydroxylysine kinase (HYKK), found in Bos taurus (Bovine).